A 439-amino-acid polypeptide reads, in one-letter code: Testican-1 (439 aa).

A signal peptide spans 1 to 21; it reads MPAIAVLAAAAAAWCFLQVES. Cystine bridges form between C86–C97, C91–C107, C136–C166, C139–C159, and C148–C180. The region spanning 130–182 is the Kazal-like domain; that stretch reads PSNLVKCKPCPVAQSAMVCGSDGHSYTSKCKLEFHACSTGKSLATLCDGPCPC. Residue T228 is glycosylated (O-linked (GalNAc...) threonine). In terms of domain architecture, Thyroglobulin type-1 spans 310-376; sequence GLPCQNEMNR…GSRKQGAVSC (67 aa). 3 disulfides stabilise this stretch: C313/C337, C348/C355, and C357/C376. O-linked (Xyl...) (glycosaminoglycan) serine glycosylation is found at S383 and S388. Residues 415–439 are disordered; it reads VHTRAVTEDDEDEDDDKEDEVGYIW. The segment covering 422-439 has biased composition (acidic residues); it reads EDDEDEDDDKEDEVGYIW.

Post-translationally, O-glycosylated. Glycosaminoglycan that contains chondroitin sulfate and heparan sulfate.

It localises to the secreted. Its subcellular location is the extracellular space. It is found in the extracellular matrix. Functionally, may play a role in cell-cell and cell-matrix interactions. May contribute to various neuronal mechanisms in the central nervous system. The sequence is that of Testican-1 (SPOCK1) from Homo sapiens (Human).